Consider the following 490-residue polypeptide: Lysine--tRNA ligase (490 aa).

The Mg(2+) site is built by Glu-400 and Glu-407.

Belongs to the class-II aminoacyl-tRNA synthetase family. In terms of assembly, homodimer. Mg(2+) serves as cofactor.

It localises to the cytoplasm. The catalysed reaction is tRNA(Lys) + L-lysine + ATP = L-lysyl-tRNA(Lys) + AMP + diphosphate. In Mycoplasma genitalium (strain ATCC 33530 / DSM 19775 / NCTC 10195 / G37) (Mycoplasmoides genitalium), this protein is Lysine--tRNA ligase (lysS).